The following is a 119-amino-acid chain: Auxin-responsive protein SAUR78 (119 aa).

It belongs to the ARG7 family.

Its function is as follows. May be involved in the regulation of ethylene receptor signaling. Promotes cell expansion and plant growth. The protein is Auxin-responsive protein SAUR78 of Arabidopsis thaliana (Mouse-ear cress).